The chain runs to 682 residues: Potassium-transporting ATPase ATP-binding subunit (682 aa).

A run of 4 helical transmembrane segments spans residues 34-54 (PVMF…IAMA), 62-82 (ALFS…ANFA), 219-239 (IALT…TATL), and 254-274 (VLVA…LSAI). Residue D307 is the 4-aspartylphosphate intermediate of the active site. Residues D344, E348, 377-384 (FTAQSRMS), and K395 each bind ATP. 2 residues coordinate Mg(2+): D518 and D522. The next 3 helical transmembrane spans lie at 588–608 (FAII…LNIM), 616–636 (AILS…PLAL), and 656–676 (IYGL…DLLL).

The protein belongs to the cation transport ATPase (P-type) (TC 3.A.3) family. Type IA subfamily. In terms of assembly, the system is composed of three essential subunits: KdpA, KdpB and KdpC.

It localises to the cell inner membrane. It carries out the reaction K(+)(out) + ATP + H2O = K(+)(in) + ADP + phosphate + H(+). Part of the high-affinity ATP-driven potassium transport (or Kdp) system, which catalyzes the hydrolysis of ATP coupled with the electrogenic transport of potassium into the cytoplasm. This subunit is responsible for energy coupling to the transport system and for the release of the potassium ions to the cytoplasm. The sequence is that of Potassium-transporting ATPase ATP-binding subunit from Escherichia coli O9:H4 (strain HS).